The chain runs to 281 residues: MNLRFTKMHGLGNDFMVIDGIRQSLPETGLPLPADEIRRLADRKFGVGFDQMLIVQPAQGDADFRYRILNADGSEVSQCGNGARCFARFVREQGLTDKKSIRVETAAGQMTLSVTDDDQITVDMGAPRWAPDAIPMTAKAEADNYFLVSGTQAWDVGAVGLGNPHCTLLVENVDTAPVDTVGPLLESHEQFPERANVGFMQIVSRNEIRLRVYERGAGETLACGSGACAAVVIGQRRDWLDDTVTVHLPGGTLHVCYDGQGGIQMTGPASHVYDGAIEIAL.

3 residues coordinate substrate: N13, Q51, and N70. The active-site Proton donor is the C79. Substrate is bound by residues G80–N81, N163, N196, and E214–R215. C223 functions as the Proton acceptor in the catalytic mechanism. Substrate is bound at residue G224–S225.

Belongs to the diaminopimelate epimerase family. As to quaternary structure, homodimer.

The protein localises to the cytoplasm. The enzyme catalyses (2S,6S)-2,6-diaminopimelate = meso-2,6-diaminopimelate. It functions in the pathway amino-acid biosynthesis; L-lysine biosynthesis via DAP pathway; DL-2,6-diaminopimelate from LL-2,6-diaminopimelate: step 1/1. Functionally, catalyzes the stereoinversion of LL-2,6-diaminopimelate (L,L-DAP) to meso-diaminopimelate (meso-DAP), a precursor of L-lysine and an essential component of the bacterial peptidoglycan. In Alcanivorax borkumensis (strain ATCC 700651 / DSM 11573 / NCIMB 13689 / SK2), this protein is Diaminopimelate epimerase.